Consider the following 141-residue polypeptide: Hemoglobin subunit alpha-A/A' (141 aa).

The 141-residue stretch at 1-141 (VLSANDKTNV…VGNVLTAKYR (141 aa)) folds into the Globin domain. Position 58 (histidine 58) interacts with O2. A heme b-binding site is contributed by histidine 87.

Belongs to the globin family. As to quaternary structure, heterotetramer of two alpha chains and two beta chains. In terms of tissue distribution, red blood cells.

Involved in oxygen transport from the lung to the various peripheral tissues. The polypeptide is Hemoglobin subunit alpha-A/A' (HBAA) (Gyps rueppelli (Rueppell's griffon)).